A 339-amino-acid polypeptide reads, in one-letter code: tRNA N6-adenosine threonylcarbamoyltransferase (339 aa).

2 residues coordinate Fe cation: H111 and H115. Substrate-binding positions include 134 to 138 (LVSGG), D167, G180, and N272. D300 provides a ligand contact to Fe cation.

Belongs to the KAE1 / TsaD family. Fe(2+) is required as a cofactor.

It localises to the cytoplasm. The enzyme catalyses L-threonylcarbamoyladenylate + adenosine(37) in tRNA = N(6)-L-threonylcarbamoyladenosine(37) in tRNA + AMP + H(+). Functionally, required for the formation of a threonylcarbamoyl group on adenosine at position 37 (t(6)A37) in tRNAs that read codons beginning with adenine. Is involved in the transfer of the threonylcarbamoyl moiety of threonylcarbamoyl-AMP (TC-AMP) to the N6 group of A37, together with TsaE and TsaB. TsaD likely plays a direct catalytic role in this reaction. The polypeptide is tRNA N6-adenosine threonylcarbamoyltransferase (Sodalis glossinidius (strain morsitans)).